Here is a 323-residue protein sequence, read N- to C-terminus: Chitinase 1 (323 aa).

The signal sequence occupies residues 1 to 20; that stretch reads MRALAVVVVATAFAVVAVRG. Residues 21–61 form the Chitin-binding type-1 domain; that stretch reads EQCGSQAGGALCPNCLCCSQYGWCGSTSAYCGSGCQSQCSG. 8 disulfide bridges follow: Cys23/Cys38, Cys32/Cys44, Cys35/Cys63, Cys37/Cys51, Cys55/Cys59, Cys100/Cys162, Cys176/Cys184, and Cys283/Cys315. Glu144 acts as the Proton donor in catalysis.

This sequence belongs to the glycosyl hydrolase 19 family. Chitinase class I subfamily. As to expression, expressed in roots, leaves, sheaths and meristems.

The enzyme catalyses Random endo-hydrolysis of N-acetyl-beta-D-glucosaminide (1-&gt;4)-beta-linkages in chitin and chitodextrins.. Hydrolyzes chitin and may play a role in defense against fungal pathogens containing chitin. The polypeptide is Chitinase 1 (Cht1) (Oryza sativa subsp. japonica (Rice)).